The sequence spans 430 residues: Adenylosuccinate synthetase (430 aa).

GTP is bound by residues Gly-12–Lys-18 and Gly-40–Thr-42. The active-site Proton acceptor is Asp-13. Residues Asp-13 and Gly-40 each coordinate Mg(2+). Residues Asp-13–Lys-16, Asn-38–His-41, Thr-130, Arg-144, Gln-224, Thr-239, and Arg-303 contribute to the IMP site. His-41 (proton donor) is an active-site residue. Ala-299–Arg-305 lines the substrate pocket. GTP-binding positions include Arg-305, Lys-331–Asp-333, and Ser-413–Gly-415.

It belongs to the adenylosuccinate synthetase family. In terms of assembly, homodimer. The cofactor is Mg(2+).

It is found in the cytoplasm. It carries out the reaction IMP + L-aspartate + GTP = N(6)-(1,2-dicarboxyethyl)-AMP + GDP + phosphate + 2 H(+). It functions in the pathway purine metabolism; AMP biosynthesis via de novo pathway; AMP from IMP: step 1/2. Functionally, plays an important role in the de novo pathway of purine nucleotide biosynthesis. Catalyzes the first committed step in the biosynthesis of AMP from IMP. The polypeptide is Adenylosuccinate synthetase (Trichlorobacter lovleyi (strain ATCC BAA-1151 / DSM 17278 / SZ) (Geobacter lovleyi)).